Here is a 2283-residue protein sequence, read N- to C-terminus: AT-rich interactive domain-containing protein 1A (2283 aa).

Residues 1-10 (MAAQVAPAAA) are compositionally biased toward low complexity. 3 disordered regions span residues 1 to 333 (MAAQ…PADM), 346 to 822 (AAAA…LPNA), and 979 to 1006 (ATKMNNKADGTPKTESKSKKSSSSTTTN). Ala2 carries the N-acetylalanine modification. Positions 22 to 34 (ELKKAEQQQREEA) are enriched in basic and acidic residues. Residues Ser56 and Ser77 each carry the phosphoserine modification. The segment covering 77–93 (SNGGGGGGGAGSGGGPG) has biased composition (gly residues). Low complexity-rich tracts occupy residues 128 to 143 (SSSDGVGAPPHSAAAA) and 233 to 266 (SSPRGGTPGSGAAAAAGSKPPPSSSASASSSSSS). At Ser234 the chain carries Phosphoserine. A compositionally biased stretch (gly residues) spans 274–287 (AMGGGGPSAAGGGT). At Thr287 the chain carries Phosphothreonine. Positions 296–300 (LNQLL) match the LXXLL motif. Residues 296–307 (LNQLLTSPSSAR) show a composition bias toward polar residues. Ser302 carries the phosphoserine modification. Over residues 311–328 (GYPGGDYGGGPQDGGAGK) the composition is skewed to gly residues. Residues Ser365 and Ser384 each carry the phosphoserine modification. Residues 402 to 427 (PYSQQQGPPSGPQQGHGYPGQPYGSQ) are compositionally biased toward low complexity. Residue Arg431 is modified to Asymmetric dimethylarginine. Polar residues-rich tracts occupy residues 438–451 (GRAQSAMGSLSYAQ) and 459–470 (QGPSAYGQQGQT). Low complexity-rich tracts occupy residues 471–547 (PYYN…QHPQ) and 554–596 (QPQA…YSQQ). Residue Ser605 is modified to Phosphoserine. Over residues 611 to 622 (SQASSAPSMTSS) the composition is skewed to low complexity. Over residues 629–638 (MNLSLQSRPS) the composition is skewed to polar residues. A compositionally biased stretch (low complexity) spans 659–675 (SPGVSTSGISSSQGEQS). Positions 676-686 (NPAQSPFSPHT) are enriched in polar residues. Phosphoserine is present on residues Ser697, Ser699, Ser703, Ser731, Ser765, and Ser773. Composition is skewed to polar residues over residues 731–748 (SGQSDSIMHPSMNQSSIA) and 756–794 (RNPQMPQYTSPQPGSALSPRQPSGGQMHSGVGSYQQNSM). Residues 795-822 (GSYGPQGSQYGPQGGYPRQPNYNALPNA) are compositionally biased toward low complexity. Residues 1018–1109 (EPERKMWVDR…CLYAFECKIE (92 aa)) enclose the ARID domain. 2 disordered regions span residues 1114–1484 (PPPD…MMGG) and 1539–1636 (RANH…PPMI). Residues 1142 to 1155 (MQGPQTPQSTSSSM) show a composition bias toward low complexity. Residues 1163-1178 (PPTPASTPHSQIPPLP) show a composition bias toward pro residues. Ser1185 is subject to Phosphoserine. Residues 1198–1220 (PTFQKRNSMTPNPGYQPSMNTSD) show a composition bias toward polar residues. The residue at position 1236 (Ser1236) is a Phosphoserine. Arg1277 is subject to Omega-N-methylarginine. The segment covering 1343–1368 (QFSTQGTPSSSPFPSQQTTMYQQQQQ) has biased composition (low complexity). Positions 1369–1388 (NYKRPMDGTYGPPAKRHEGE) match the Nuclear localization signal motif. The span at 1395 to 1426 (SAGQGQPQQQQLPAAQSQPASQPQAAQPSPQQ) shows a compositional bias: low complexity. Composition is skewed to polar residues over residues 1427 to 1436 (DVYNQYSNAY) and 1469 to 1478 (PGSSAQQNMP). Over residues 1555 to 1579 (PYGPSAPVPPMTRPPPSNYQPPPSM) the composition is skewed to pro residues. Residue Ser1605 is modified to Phosphoserine. At Lys1613 the chain carries N6-acetyllysine. Residues 1710–1714 (LPGLL) carry the LXXLL motif. 3 disordered regions span residues 1757–1782 (PAHTEEEEEEHLDPKLEEEEEEGVGN), 1872–1904 (CPTPPRKHLTTVEGTPGTTEQEGPPPDGLPEKR), and 1917–1941 (SSTLTDEGAKSAEATKESSKFPFGI). Positions 1761–1782 (EEEEEEHLDPKLEEEEEEGVGN) are enriched in acidic residues. Thr1874 and Thr1886 each carry phosphothreonine. The segment covering 1882-1893 (TVEGTPGTTEQE) has biased composition (low complexity). Lys1903 is subject to N6-acetyllysine. Residues 1923 to 1935 (EGAKSAEATKESS) are compositionally biased toward basic and acidic residues. Residues Ser1927 and Ser1942 each carry the phosphoserine modification. 2 short sequence motifs (LXXLL) span residues 1965 to 1969 (LCTLL) and 2083 to 2087 (LDGLL).

As to quaternary structure, component of SWI/SNF chromatin remodeling complexes, in some of which it can be mutually exclusive with ARID1B/BAF250B. The canonical complex contains a catalytic subunit (either SMARCA4/BRG1/BAF190A or SMARCA2/BRM/BAF190B) and at least SMARCE1, ACTL6A/BAF53, SMARCC1/BAF155, SMARCC2/BAF170, and SMARCB1/SNF5/BAF47. Other subunits specific to each of the complexes may also be present permitting several possible combinations developmentally and tissue specific. Component of the BAF (SWI/SNF-A) complex, which includes at least actin (ACTB), ARID1A/BAF250A, ARID1B/BAF250B, SMARCA2/BRM, SMARCA4/BRG1/BAF190A, ACTL6A/BAF53, ACTL6B/BAF53B, SMARCE1/BAF57, SMARCC1/BAF155, SMARCC2/BAF170, SMARCB1/SNF5/INI1, and one or more SMARCD1/BAF60A, SMARCD2/BAF60B, or SMARCD3/BAF60C. In muscle cells, the BAF complex also contains DPF3. Component of neural progenitors-specific chromatin remodeling complex (npBAF complex) composed of at least, ARID1A/BAF250A or ARID1B/BAF250B, SMARCD1/BAF60A, SMARCD3/BAF60C, SMARCA2/BRM/BAF190B, SMARCA4/BRG1/BAF190A, SMARCB1/BAF47, SMARCC1/BAF155, SMARCE1/BAF57, SMARCC2/BAF170, PHF10/BAF45A, ACTL6A/BAF53A and actin. Component of neuron-specific chromatin remodeling complex (nBAF complex) composed of at least, ARID1A/BAF250A or ARID1B/BAF250B, SMARCD1/BAF60A, SMARCD3/BAF60C, SMARCA2/BRM/BAF190B, SMARCA4/BRG1/BAF190A, SMARCB1/BAF47, SMARCC1/BAF155, SMARCE1/BAF57, SMARCC2/BAF170, DPF1/BAF45B, DPF3/BAF45C, ACTL6B/BAF53B and actin. Component of a SWI/SNF-like EBAFa complex, at least composed of SMARCA4/BRG1/BAF190A, SMARCB1/BAF47/SNF5, ACTL6A/BAF53A, SMARCE1/BAF57, SMARCD1/BAF60A, SMARCC1/BAF155, SMARCC2/BAF170, BAF250A and MLLT1/ENL. Interacts through its C-terminus with SMARCA2/BRM/BAF190B and SMARCA4/BRG1/BAF190A. Interacts with SMARCC1/BAF155. Interacts with FOS (via bZIP domain and leucine-zipper region), FOSB isoform 1 and 2, FOSL1 and FOSL2. In terms of tissue distribution, widely expressed. Expressed at high levels in the testis.

Its subcellular location is the nucleus. Functionally, involved in transcriptional activation and repression of select genes by chromatin remodeling (alteration of DNA-nucleosome topology). Component of SWI/SNF chromatin remodeling complexes that carry out key enzymatic activities, changing chromatin structure by altering DNA-histone contacts within a nucleosome in an ATP-dependent manner. Binds DNA non-specifically. Belongs to the neural progenitors-specific chromatin remodeling complex (npBAF complex) and the neuron-specific chromatin remodeling complex (nBAF complex). During neural development a switch from a stem/progenitor to a postmitotic chromatin remodeling mechanism occurs as neurons exit the cell cycle and become committed to their adult state. The transition from proliferating neural stem/progenitor cells to postmitotic neurons requires a switch in subunit composition of the npBAF and nBAF complexes. As neural progenitors exit mitosis and differentiate into neurons, npBAF complexes which contain ACTL6A/BAF53A and PHF10/BAF45A, are exchanged for homologous alternative ACTL6B/BAF53B and DPF1/BAF45B or DPF3/BAF45C subunits in neuron-specific complexes (nBAF). The npBAF complex is essential for the self-renewal/proliferative capacity of the multipotent neural stem cells. The nBAF complex along with CREST plays a role regulating the activity of genes essential for dendrite growth. The chain is AT-rich interactive domain-containing protein 1A (Arid1a) from Mus musculus (Mouse).